The following is a 144-amino-acid chain: Large-conductance mechanosensitive channel (144 aa).

2 helical membrane-spanning segments follow: residues 16–36 (VIDL…VDSV) and 86–106 (GNFL…FLMV).

It belongs to the MscL family. In terms of assembly, homopentamer.

It localises to the cell inner membrane. Functionally, channel that opens in response to stretch forces in the membrane lipid bilayer. May participate in the regulation of osmotic pressure changes within the cell. This is Large-conductance mechanosensitive channel from Cupriavidus pinatubonensis (strain JMP 134 / LMG 1197) (Cupriavidus necator (strain JMP 134)).